The sequence spans 430 residues: Serine hydroxymethyltransferase (430 aa).

120-122 (GHI) contacts (6S)-5,6,7,8-tetrahydrofolate. Lys226 is subject to N6-(pyridoxal phosphate)lysine.

It belongs to the SHMT family. In terms of assembly, homodimer. Pyridoxal 5'-phosphate serves as cofactor.

It is found in the cytoplasm. Its pathway is amino-acid biosynthesis; glycine biosynthesis; glycine from L-serine: step 1/1. Functionally, catalyzes the reversible interconversion of serine and glycine with a modified folate serving as the one-carbon carrier. Also exhibits a pteridine-independent aldolase activity toward beta-hydroxyamino acids, producing glycine and aldehydes, via a retro-aldol mechanism. In Pyrobaculum aerophilum (strain ATCC 51768 / DSM 7523 / JCM 9630 / CIP 104966 / NBRC 100827 / IM2), this protein is Serine hydroxymethyltransferase.